Reading from the N-terminus, the 592-residue chain is V-type ATP synthase alpha chain (592 aa).

Residue 232 to 239 (GPFGAGKT) coordinates ATP.

Belongs to the ATPase alpha/beta chains family.

The catalysed reaction is ATP + H2O + 4 H(+)(in) = ADP + phosphate + 5 H(+)(out). Produces ATP from ADP in the presence of a proton gradient across the membrane. The V-type alpha chain is a catalytic subunit. The sequence is that of V-type ATP synthase alpha chain from Clostridium botulinum (strain Alaska E43 / Type E3).